We begin with the raw amino-acid sequence, 123 residues long: Anti-lipopolysaccharide factor (123 aa).

The N-terminal stretch at 1–26 is a signal peptide; it reads MRKGVVAGLCLALVVMCLYLPQPCEA. An N-linked (GlcNAc...) asparagine glycan is attached at asparagine 45. A disulfide bond links cysteine 55 and cysteine 76.

Isoform 1 is highly expressed in muscle and stomach, moderately in heart and gill and at lower levels in hemocytes and hepatopancreas. Isoform 2 is mainly expressed in gill, hepatopancreas, muscle and eyestalk.

The protein localises to the secreted. May bind to bacterial LPS and thus specifically inhibit the LPS-mediated activation of the hemolymph coagulation. It has a strong antibacterial effect especially on the growth of Gram-negative bacteria. This chain is Anti-lipopolysaccharide factor, found in Portunus trituberculatus (Swimming crab).